Reading from the N-terminus, the 391-residue chain is 3-ketoacyl-CoA thiolase (391 aa).

The Acyl-thioester intermediate role is filled by C95. Residues H347 and C377 each act as proton acceptor in the active site.

It belongs to the thiolase-like superfamily. Thiolase family. As to quaternary structure, heterotetramer of two alpha chains (FadB) and two beta chains (FadA).

It is found in the cytoplasm. The catalysed reaction is an acyl-CoA + acetyl-CoA = a 3-oxoacyl-CoA + CoA. It participates in lipid metabolism; fatty acid beta-oxidation. Its function is as follows. Catalyzes the final step of fatty acid oxidation in which acetyl-CoA is released and the CoA ester of a fatty acid two carbons shorter is formed. The chain is 3-ketoacyl-CoA thiolase from Marinobacter nauticus (strain ATCC 700491 / DSM 11845 / VT8) (Marinobacter aquaeolei).